A 212-amino-acid polypeptide reads, in one-letter code: Putative aryl-alcohol dehydrogenase AAD6 (212 aa).

Residue Tyr76 is the Proton donor of the active site.

This sequence belongs to the aldo/keto reductase family. Aldo/keto reductase 2 subfamily.

The protein is Putative aryl-alcohol dehydrogenase AAD6 of Saccharomyces cerevisiae (strain ATCC 204508 / S288c) (Baker's yeast).